A 563-amino-acid polypeptide reads, in one-letter code: Chaperonin GroEL 1 (563 aa).

ATP is bound by residues 29–32 (TIGP), 86–90 (DGTTT), G413, and D492. The segment at 520-541 (DKPEPPSAPGAEGGDPMGGMGG) is disordered. Positions 530–541 (AEGGDPMGGMGG) are enriched in gly residues.

It belongs to the chaperonin (HSP60) family. Forms a cylinder of 14 subunits composed of two heptameric rings stacked back-to-back. Interacts with the co-chaperonin GroES.

It localises to the cytoplasm. The enzyme catalyses ATP + H2O + a folded polypeptide = ADP + phosphate + an unfolded polypeptide.. Together with its co-chaperonin GroES, plays an essential role in assisting protein folding. The GroEL-GroES system forms a nano-cage that allows encapsulation of the non-native substrate proteins and provides a physical environment optimized to promote and accelerate protein folding. The polypeptide is Chaperonin GroEL 1 (Prochlorococcus marinus (strain NATL1A)).